A 207-amino-acid polypeptide reads, in one-letter code: Chloramphenicol acetyltransferase (207 aa).

His-186 (proton acceptor) is an active-site residue.

This sequence belongs to the chloramphenicol acetyltransferase family. Homotrimer.

It carries out the reaction chloramphenicol + acetyl-CoA = chloramphenicol 3-acetate + CoA. In terms of biological role, this enzyme is an effector of chloramphenicol resistance in bacteria. This chain is Chloramphenicol acetyltransferase (catP), found in Clostridium perfringens.